We begin with the raw amino-acid sequence, 189 residues long: Cell division protein SepF (189 aa).

A compositionally biased stretch (polar residues) spans 152–163 (FQEEPSPSSVMN). Residues 152–189 (FQEEPSPSSVMNKDNEGPVSESVMAPEPAWGASVPSAI) are disordered.

This sequence belongs to the SepF family. As to quaternary structure, homodimer. Interacts with FtsZ.

It localises to the cytoplasm. In terms of biological role, cell division protein that is part of the divisome complex and is recruited early to the Z-ring. Probably stimulates Z-ring formation, perhaps through the cross-linking of FtsZ protofilaments. Its function overlaps with FtsA. This is Cell division protein SepF from Prochlorococcus marinus (strain SARG / CCMP1375 / SS120).